We begin with the raw amino-acid sequence, 340 residues long: MEQTLRVSVFGATGYTGIELLRSLLTHPHFEVKNLISQSYKGKKVREVLPFFSNTYISEIEFLEEPVEDYELAFLCLPHEVSYEIVPKLLSQGKKVVDLSGAYRIKSPKAYEEFYGFKHEREDILQRAVYGLPEVFREEIKNSDLVANPGCYPTATLLAIYPFLKERVGIESVIVHALSGVSGAGRKPKQQFHFPEMTENFFNYAVEKHRHTPEMEDVIRRVYGREVKVRFTPTVVPTSRGMISTVYLKSEKLNVKELFKEVYEDEIFVKVVDEPPQTKWVLGTNYCFIYPHYDERTGYYVIISAIDNLGKGASLQAVQNANLMFGLAEDDGLLQLPVFP.

Residue Cys151 is part of the active site.

The protein belongs to the NAGSA dehydrogenase family. Type 1 subfamily.

The protein resides in the cytoplasm. It catalyses the reaction N-acetyl-L-glutamate 5-semialdehyde + phosphate + NADP(+) = N-acetyl-L-glutamyl 5-phosphate + NADPH + H(+). It participates in amino-acid biosynthesis; L-arginine biosynthesis; N(2)-acetyl-L-ornithine from L-glutamate: step 3/4. In terms of biological role, catalyzes the NADPH-dependent reduction of N-acetyl-5-glutamyl phosphate to yield N-acetyl-L-glutamate 5-semialdehyde. This is N-acetyl-gamma-glutamyl-phosphate reductase from Aquifex aeolicus (strain VF5).